Consider the following 33-residue polypeptide: Photosystem II reaction center protein Psb30 (33 aa).

A helical transmembrane segment spans residues 5–25 (VLAQLTVLTLIVISGPLVIAL).

Belongs to the Psb30/Ycf12 family. As to quaternary structure, PSII is composed of 1 copy each of membrane proteins PsbA, PsbB, PsbC, PsbD, PsbE, PsbF, PsbH, PsbI, PsbJ, PsbK, PsbL, PsbM, PsbT, PsbX, PsbY, PsbZ, Psb30/Ycf12, peripheral proteins of the oxygen-evolving complex and a large number of cofactors. It forms dimeric complexes.

It is found in the plastid. It localises to the chloroplast thylakoid membrane. A core subunit of photosystem II (PSII), probably helps stabilize the reaction center. The polypeptide is Photosystem II reaction center protein Psb30 (Cycas taitungensis (Prince sago)).